Here is a 215-residue protein sequence, read N- to C-terminus: Rho-related GTP-binding protein RhoF (215 aa).

N-acetylmethionine is present on M1. Position 30–37 (30–37) interacts with GTP; that stretch reads GDGGCGKT. Positions 52-60 match the Effector region motif; that stretch reads YAPSVFEKY. Residues 77–81 and 135–138 contribute to the GTP site; these read DTAGQ and CKTD. C212 carries the cysteine methyl ester modification. C212 carries S-geranylgeranyl cysteine lipidation. The propeptide at 213 to 215 is removed in mature form; it reads LLL.

The protein belongs to the small GTPase superfamily. Rho family.

The protein resides in the cell membrane. It localises to the cytoplasm. The protein localises to the cytoskeleton. In terms of biological role, plasma membrane-associated small GTPase which cycles between an active GTP-bound and an inactive GDP-bound state. Causes the formation of thin, actin-rich surface projections called filopodia. Functions cooperatively with CDC42 and Rac to generate additional structures, increasing the diversity of actin-based morphology. The sequence is that of Rho-related GTP-binding protein RhoF (RHOF) from Bos taurus (Bovine).